Here is a 113-residue protein sequence, read N- to C-terminus: Ribulose bisphosphate carboxylase small subunit (113 aa).

It belongs to the RuBisCO small chain family. In terms of assembly, heterohexadecamer of 8 large and 8 small subunits.

It localises to the carboxysome. Functionally, ruBisCO catalyzes two reactions: the carboxylation of D-ribulose 1,5-bisphosphate, the primary event in carbon dioxide fixation, as well as the oxidative fragmentation of the pentose substrate in the photorespiration process. Both reactions occur simultaneously and in competition at the same active site. Although the small subunit is not catalytic it is essential for maximal activity. In Synechococcus sp. (strain WH7803), this protein is Ribulose bisphosphate carboxylase small subunit.